We begin with the raw amino-acid sequence, 66 residues long: Ocellatin-PT3 (66 aa).

The N-terminal stretch at 1-22 (MAFLKKSLFLVLFLGLVSLSIC) is a signal peptide. Positions 23–39 (DEEKRQDEDDDDDDDEE) are excised as a propeptide. The residue at position 66 (Val66) is a Valine amide.

As to expression, expressed by the skin glands.

It localises to the secreted. In terms of biological role, has antibacterial activity against Gram-negative bacterium E.coli ATCC 25922 (MIC=320 uM) but not against S.pneumoniae ATCC 700603, S.choleraesuis ATCC 14028 or Gram-positive bacterium S.aureus ATCC 29313. Shows no hemolytic activity and no cytotoxicity. This Leptodactylus pustulatus (Ceara white-lipped frog) protein is Ocellatin-PT3.